The primary structure comprises 190 residues: Transcription antitermination protein NusB (190 aa).

The disordered stretch occupies residues 158-190 (AGTSEDHVPQREPAAGQLGQDDSNGGQVAAVCR).

It belongs to the NusB family.

Functionally, involved in transcription antitermination. Required for transcription of ribosomal RNA (rRNA) genes. Binds specifically to the boxA antiterminator sequence of the ribosomal RNA (rrn) operons. In Mycobacterium leprae (strain TN), this protein is Transcription antitermination protein NusB.